The chain runs to 370 residues: D-aspartate oxidase (370 aa).

Positions methionine 1–alanine 18 are cleaved as a signal peptide. Positions 13, 42, 63, 64, and 68 each coordinate FAD. The N-linked (GlcNAc...) asparagine glycan is linked to asparagine 207. Arginine 308, glycine 338, and tyrosine 339 together coordinate FAD.

The protein belongs to the DAMOX/DASOX family. In terms of assembly, monomer. Requires FAD as cofactor.

The enzyme catalyses D-aspartate + O2 + H2O = oxaloacetate + H2O2 + NH4(+). The catalysed reaction is D-glutamate + O2 + H2O = H2O2 + 2-oxoglutarate + NH4(+). In terms of biological role, selectively catalyzes the oxidative deamination of acidic amino acids. Protects the organism from the toxicity of D-amino acids. Enables the organism to utilize D-amino acids as a source of nutrients. The protein is D-aspartate oxidase of Talaromyces thermophilus.